We begin with the raw amino-acid sequence, 198 residues long: Probable GTP-binding protein EngB (198 aa).

One can recognise an EngB-type G domain in the interval 27–198; it reads DLPEVALAGR…ESWDTILSEL (172 aa). GTP contacts are provided by residues 35–42, 62–66, 80–83, 147–150, and 179–181; these read GRSNVGKS, GKTQL, DVPG, TKAD, and FSS. Mg(2+) is bound by residues Ser-42 and Thr-64.

Belongs to the TRAFAC class TrmE-Era-EngA-EngB-Septin-like GTPase superfamily. EngB GTPase family. Mg(2+) is required as a cofactor.

Necessary for normal cell division and for the maintenance of normal septation. The polypeptide is Probable GTP-binding protein EngB (Streptococcus agalactiae serotype Ia (strain ATCC 27591 / A909 / CDC SS700)).